Here is a 325-residue protein sequence, read N- to C-terminus: Undecaprenyl-phosphate 4-deoxy-4-formamido-L-arabinose transferase (325 aa).

The next 2 membrane-spanning stretches (helical) occupy residues Leu-236–Leu-256 and Val-270–Leu-290.

The protein belongs to the glycosyltransferase 2 family.

The protein resides in the cell inner membrane. The catalysed reaction is UDP-4-deoxy-4-formamido-beta-L-arabinose + di-trans,octa-cis-undecaprenyl phosphate = 4-deoxy-4-formamido-alpha-L-arabinopyranosyl di-trans,octa-cis-undecaprenyl phosphate + UDP. It participates in glycolipid biosynthesis; 4-amino-4-deoxy-alpha-L-arabinose undecaprenyl phosphate biosynthesis; 4-amino-4-deoxy-alpha-L-arabinose undecaprenyl phosphate from UDP-4-deoxy-4-formamido-beta-L-arabinose and undecaprenyl phosphate: step 1/2. It functions in the pathway bacterial outer membrane biogenesis; lipopolysaccharide biosynthesis. Catalyzes the transfer of 4-deoxy-4-formamido-L-arabinose from UDP to undecaprenyl phosphate. The modified arabinose is attached to lipid A and is required for resistance to polymyxin and cationic antimicrobial peptides. The chain is Undecaprenyl-phosphate 4-deoxy-4-formamido-L-arabinose transferase from Edwardsiella ictaluri (strain 93-146).